The primary structure comprises 130 residues: Small ribosomal subunit protein uS9 (130 aa).

It belongs to the universal ribosomal protein uS9 family.

The protein is Small ribosomal subunit protein uS9 of Streptococcus gordonii (strain Challis / ATCC 35105 / BCRC 15272 / CH1 / DL1 / V288).